A 544-amino-acid chain; its full sequence is Putative ankyrin repeat protein L289 (544 aa).

ANK repeat units follow at residues lysine 31–glutamate 71, histidine 72–isoleucine 105, tyrosine 110–histidine 143, leucine 147–serine 181, glutamine 185–isoleucine 218, lysine 222–phenylalanine 255, tyrosine 259–isoleucine 297, aspartate 300–serine 339, asparagine 340–isoleucine 374, glutamine 378–asparagine 413, and threonine 414–lysine 447.

This Acanthamoeba polyphaga mimivirus (APMV) protein is Putative ankyrin repeat protein L289.